The following is a 908-amino-acid chain: 3-phosphoinositide-dependent protein kinase B (908 aa).

Composition is skewed to low complexity over residues 53 to 170, 179 to 189, and 200 to 216; these read NNNF…SSSL, YSDSSDSIDSY, and QQQQ…QPLH. Residues 53-267 form a disordered region; sequence NNNFNNNNNN…PNSSIPHKKS (215 aa). The span at 250–262 shows a compositional bias: polar residues; the sequence is KTSSFGLQPNSSI. Positions 271-527 constitute a Protein kinase domain; sequence FDFIRTIGKG…ISEIKNHEFF (257 aa). ATP is bound by residues 281 to 283 and lysine 300; that span reads AYG. Residues 302–346 are PIF-pocket; it reads LNKKLIIKEKKAKYVNTEKTILDSLDNPNIVKLFYTFQDENNLYF. ATP contacts are provided by residues 349–351 and aspartate 355; that span reads EYC. Aspartate 394 (proton acceptor) is an active-site residue. ATP is bound by residues glutamate 398 and aspartate 412. Disordered stretches follow at residues 538 to 560 and 606 to 755; these read SQTP…NSSL and ISNN…KNLQ. The span at 607 to 684 shows a compositional bias: low complexity; sequence SNNNNNNNNT…PAYSSTPSST (78 aa). The segment covering 696 to 709 has biased composition (polar residues); that stretch reads SSCSSNNLLGKSSN. The segment covering 710-741 has biased composition (low complexity); sequence QQYQPFQFHQQQQQQQQQQQRERSSTTTPSPT. Residues 764–902 form the PH domain; the sequence is SSFSTSSPMS…KLWVDLINEL (139 aa).

It belongs to the protein kinase superfamily. AGC Ser/Thr protein kinase family. PDPK1 subfamily.

It catalyses the reaction L-seryl-[protein] + ATP = O-phospho-L-seryl-[protein] + ADP + H(+). It carries out the reaction L-threonyl-[protein] + ATP = O-phospho-L-threonyl-[protein] + ADP + H(+). The chain is 3-phosphoinositide-dependent protein kinase B (pdkB) from Dictyostelium discoideum (Social amoeba).